The primary structure comprises 200 residues: ATP-dependent Clp protease proteolytic subunit (200 aa).

Serine 98 serves as the catalytic Nucleophile. The active site involves histidine 123.

It belongs to the peptidase S14 family. Fourteen ClpP subunits assemble into 2 heptameric rings which stack back to back to give a disk-like structure with a central cavity, resembling the structure of eukaryotic proteasomes.

Its subcellular location is the cytoplasm. It carries out the reaction Hydrolysis of proteins to small peptides in the presence of ATP and magnesium. alpha-casein is the usual test substrate. In the absence of ATP, only oligopeptides shorter than five residues are hydrolyzed (such as succinyl-Leu-Tyr-|-NHMec, and Leu-Tyr-Leu-|-Tyr-Trp, in which cleavage of the -Tyr-|-Leu- and -Tyr-|-Trp bonds also occurs).. In terms of biological role, cleaves peptides in various proteins in a process that requires ATP hydrolysis. Has a chymotrypsin-like activity. Plays a major role in the degradation of misfolded proteins. The protein is ATP-dependent Clp protease proteolytic subunit of Deinococcus geothermalis (strain DSM 11300 / CIP 105573 / AG-3a).